A 102-amino-acid polypeptide reads, in one-letter code: Small ribosomal subunit protein uS10 (102 aa).

This sequence belongs to the universal ribosomal protein uS10 family. As to quaternary structure, part of the 30S ribosomal subunit.

In terms of biological role, involved in the binding of tRNA to the ribosomes. This chain is Small ribosomal subunit protein uS10, found in Methanosphaerula palustris (strain ATCC BAA-1556 / DSM 19958 / E1-9c).